A 390-amino-acid polypeptide reads, in one-letter code: Chorismate synthase 1 (390 aa).

2 residues coordinate NADP(+): Arg-39 and Arg-45. The tract at residues 95–117 (EQEEKEMKRKVTKPRPGHADLNG) is disordered. FMN is bound by residues 132–134 (RSS), 253–254 (NA), Gly-298, 313–317 (KPIPT), and Arg-339.

Belongs to the chorismate synthase family. In terms of assembly, homotetramer. Requires FMNH2 as cofactor.

The enzyme catalyses 5-O-(1-carboxyvinyl)-3-phosphoshikimate = chorismate + phosphate. The protein operates within metabolic intermediate biosynthesis; chorismate biosynthesis; chorismate from D-erythrose 4-phosphate and phosphoenolpyruvate: step 7/7. In terms of biological role, catalyzes the anti-1,4-elimination of the C-3 phosphate and the C-6 proR hydrogen from 5-enolpyruvylshikimate-3-phosphate (EPSP) to yield chorismate, which is the branch point compound that serves as the starting substrate for the three terminal pathways of aromatic amino acid biosynthesis. This reaction introduces a second double bond into the aromatic ring system. This is Chorismate synthase 1 from Bacillus cereus (strain ATCC 14579 / DSM 31 / CCUG 7414 / JCM 2152 / NBRC 15305 / NCIMB 9373 / NCTC 2599 / NRRL B-3711).